We begin with the raw amino-acid sequence, 389 residues long: Xylose isomerase (389 aa).

Catalysis depends on residues H54 and D57. Mg(2+) contacts are provided by E181, E217, H220, D245, D255, D257, and D287.

Belongs to the xylose isomerase family. In terms of assembly, homotetramer. Mg(2+) serves as cofactor.

The protein resides in the cytoplasm. The enzyme catalyses alpha-D-xylose = alpha-D-xylulofuranose. Its function is as follows. Involved in D-xylose catabolism. In Streptomyces violaceusniger, this protein is Xylose isomerase (xylA).